The sequence spans 163 residues: Probable ribosome biogenesis protein RLP24 (163 aa).

This sequence belongs to the eukaryotic ribosomal protein eL24 family. Associated with nucleolar and cytoplasmic pre-60S particles. At the end of biogenesis it dissociates from cytoplasmic pre-60S particles and is likely to be exchanged for its ribosomal homolog, RPL24.

The protein resides in the nucleus. Its subcellular location is the nucleolus. Involved in the biogenesis of the 60S ribosomal subunit. Ensures the docking of GTPBP4/NOG1 to pre-60S particles. This Mus musculus (Mouse) protein is Probable ribosome biogenesis protein RLP24 (Rsl24d1).